We begin with the raw amino-acid sequence, 242 residues long: ATP-dependent dethiobiotin synthetase BioD (242 aa).

12 to 17 is an ATP binding site; the sequence is EVGKTV. Thr16 is a Mg(2+) binding site. Lys37 is a catalytic residue. Ser41 contributes to the substrate binding site. ATP is bound by residues Asp51 and 112–115; that span reads EGAG. Mg(2+) contacts are provided by Asp51 and Glu112.

It belongs to the dethiobiotin synthetase family. In terms of assembly, homodimer. It depends on Mg(2+) as a cofactor.

Its subcellular location is the cytoplasm. It catalyses the reaction (7R,8S)-7,8-diammoniononanoate + CO2 + ATP = (4R,5S)-dethiobiotin + ADP + phosphate + 3 H(+). It participates in cofactor biosynthesis; biotin biosynthesis; biotin from 7,8-diaminononanoate: step 1/2. In terms of biological role, catalyzes a mechanistically unusual reaction, the ATP-dependent insertion of CO2 between the N7 and N8 nitrogen atoms of 7,8-diaminopelargonic acid (DAPA, also called 7,8-diammoniononanoate) to form a ureido ring. The sequence is that of ATP-dependent dethiobiotin synthetase BioD from Bacillus thuringiensis subsp. konkukian (strain 97-27).